Consider the following 1405-residue polypeptide: MKDLLKFLKQQSKTEEFNGIKIGLASPDLIRSWSFGEVKKPETINYRTFKPEREGLFCARIFGPVKDYECLCGKYKRLKHRGVICEKCGVEVTQTKVRRERMGHIELASPVAHIWFLKSLPSRIGLMLDMTLRDIERVLYFESFVVIEPGMTSLERGQMLTEETYLDALEEYGDEFEAKMGAEAVLELLRAIDLEKEIEQMREELPSINSETRRKKVTKRLKLMEAFHTSGNKPEWMILKVLPVLPPDLRPLVPLDGGRFATSDLNDLYRRVINRNNRLKRLLDLAAPDIIVRNEKRMLQESVDALLDNGRRGRAITGSNKRPLKSLADMIKGKQGRFRQNLLGKRVDYSGRSVITVGPTLRLHQCGLPKKMALELFKPFIYGKLEGRGLATTIKAAKKMVEREVAEVWDVLDEVIREHPVMLNRAPTLHRLGIQAFEPVLIEGKAIQLHPLVCAAYNADFDGDQMAVHVPLTLEAQLEARALMMSTNNILSPANGEPVITPSQDVVLGLYYTSRERINGRGEGMYFMSVAEVEKAYATGAAELHARVKVRITETIIDENGERSEQRRIVDTTVGRALLSQILPAGLSFDLVNQNMGKKQISKLLNTCYRQLGLKDTVIFADQLMYTGFRYATISGASVGIDDMVIPAEKYTLVADAEAEVLEIQEQFQSGLVTAGERYNKVIDIWASANEKVSKAMMENLSTETVINRDGVEEKQASFNSIYMMADSGARGSAAQIRQLAGMRGLMAKPDGSIIETPIVANFREGLNVLQYFISTHGARKGLADTALKTANSGYLTRRLVDVAQDLVVIEDDCGTHEGLTMKPLIEGGDVVEPLRERVLGRVVAVDVFYPGTEDVLAPRNTLLDEAWCDKLEEHSIDEVIVRSVITCDTDFGVCAACYGRDLARGHIINHGEAIGVVAAQSIGEPGTQLTMRTFHIGGAASRASAENNVQVKNSGSLKLHNAKYVTNTDGKLVIVSRSSELAIIDELGREKERYKVPYGTVLEKLEEASVEAGDIIANWDPHTHPIITEVAGSIKFVDMIDGVTMTRQTDELTGLSSIVILDVGQRGSAGKEMRPMIRLVGADGSDLMIPGTEVPAQYFLPGSAIVNLDDNAQIAVGDALARIPQESSKTRDITGGLPRVADLFEARKPKEPAILAEISGTISFGKETKGKRRLVITPADGGEQYEEMIPKWRNLNVFEGEKVERGEVIADGPEAAHDILRLRGIHNVANYIVNEVQDVYRLQGVKINDKHIEVIIRQMLRKCVITAAGDSEFLEGEQVEVSRVKIANRELVEQGKVPATFERELLGITKASLATESFISAASFQETTRVLTEAAVGGKSDNLRGLKENVIVGRLIPAGTGYAYHKTRNDARAKKDEPVVVNKITASEAEQNLADLLNLAGSQD.

Residues Cys-70, Cys-72, Cys-85, and Cys-88 each contribute to the Zn(2+) site. Mg(2+)-binding residues include Asp-460, Asp-462, and Asp-464. Zn(2+) contacts are provided by Cys-814, Cys-888, Cys-895, and Cys-898.

It belongs to the RNA polymerase beta' chain family. In terms of assembly, the RNAP catalytic core consists of 2 alpha, 1 beta, 1 beta' and 1 omega subunit. When a sigma factor is associated with the core the holoenzyme is formed, which can initiate transcription. The cofactor is Mg(2+). Zn(2+) serves as cofactor.

The catalysed reaction is RNA(n) + a ribonucleoside 5'-triphosphate = RNA(n+1) + diphosphate. Functionally, DNA-dependent RNA polymerase catalyzes the transcription of DNA into RNA using the four ribonucleoside triphosphates as substrates. The polypeptide is DNA-directed RNA polymerase subunit beta' (Shewanella oneidensis (strain ATCC 700550 / JCM 31522 / CIP 106686 / LMG 19005 / NCIMB 14063 / MR-1)).